We begin with the raw amino-acid sequence, 312 residues long: Coiled-coil domain-containing protein 42 homolog (312 aa).

Coiled coils occupy residues 34–121 and 172–233; these read RLLE…RLKE and ATHQ…WESQ.

It belongs to the CFAP73 family.

This is Coiled-coil domain-containing protein 42 homolog from Nematostella vectensis (Starlet sea anemone).